Consider the following 196-residue polypeptide: Ankyrin repeat domain-containing protein 66 (196 aa).

ANK repeat units lie at residues 7-37, 43-72, and 76-105; these read SDMT…DPNY, NDRT…RPCL, and VGWT…AIDA. Residues 152 to 196 form a disordered region; it reads ERDEDWDAKKRELELSLPSLNQNMNKKNKKSRGPTRPSNTKGRRV. Residues 187–196 show a composition bias toward polar residues; sequence RPSNTKGRRV.

This is Ankyrin repeat domain-containing protein 66 (ANKRD66) from Homo sapiens (Human).